Reading from the N-terminus, the 388-residue chain is MNIHEYQGKEIFRSMGVAVPEGRVAFTAEEAVEKAKEFNSDVYVVKAQIHAGGRGKAGGVKIAKSLSEVETYAKELLGKTLVTHQTGPEGKEIKRLYIEEGCAIQKEYYVGFVIDRATDQVTLMASEEGGTEIEEVAAKTPEKIFKETIDPVIGLSPFQARRIAFNINIPKESVNKAAKFLLALYNVFIEKDCSIVEINPLVTTADGDVLVLDAKINFDDNALFRHKDVVELRDLEEEDPKEIEASKHDLSYIALDGDIGCMVNGAGLAMATMDTINHFGGNPANFLDAGGSATREKVTEAFKIILGDENVKGIFVNIFGGIMKCDVIAEGIVEAVKEVDLTLPLVVRLEGTNVELGKKILKDSGLAIEPAATMAEGAQKIVKLVKEA.

The ATP-grasp domain maps to 9 to 244 (KEIFRSMGVA…LEEEDPKEIE (236 aa)). Residues Lys-46, 53-55 (GRG), Glu-99, Cys-102, and Glu-107 each bind ATP. Asn-199 and Asp-213 together coordinate Mg(2+). Substrate is bound by residues Asn-264 and 321-323 (GIM).

Belongs to the succinate/malate CoA ligase beta subunit family. Heterotetramer of two alpha and two beta subunits. Mg(2+) is required as a cofactor.

It carries out the reaction succinate + ATP + CoA = succinyl-CoA + ADP + phosphate. The enzyme catalyses GTP + succinate + CoA = succinyl-CoA + GDP + phosphate. The protein operates within carbohydrate metabolism; tricarboxylic acid cycle; succinate from succinyl-CoA (ligase route): step 1/1. Its function is as follows. Succinyl-CoA synthetase functions in the citric acid cycle (TCA), coupling the hydrolysis of succinyl-CoA to the synthesis of either ATP or GTP and thus represents the only step of substrate-level phosphorylation in the TCA. The beta subunit provides nucleotide specificity of the enzyme and binds the substrate succinate, while the binding sites for coenzyme A and phosphate are found in the alpha subunit. This is Succinate--CoA ligase [ADP-forming] subunit beta from Staphylococcus aureus (strain bovine RF122 / ET3-1).